The following is a 701-amino-acid chain: Capsid protein VP1 (701 aa).

The protein belongs to the caliciviridae capsid protein family. In terms of assembly, homodimer. Homomultimer. Interacts with the minor capsid protein VP2. May bind to VP3 and Vpg proteins. Post-translationally, cleaved by the viral protease to produce mature capsid protein.

The protein resides in the virion. Its subcellular location is the host cytoplasm. Capsid protein self assembles to form an icosahedral capsid with a T=3 symmetry, about 38 nm in diameter, and consisting of 180 capsid proteins. A smaller form of capsid with a diameter of 23 nm might be capsid proteins assembled as icosahedron with T=1 symmetry. The capsid encapsulates the genomic RNA and is decorated with VP2 proteins. This chain is Capsid protein VP1, found in Vesicular exanthema of swine virus serotype A48 (isolate Swine/United States/A48/1948) (VESV).